The primary structure comprises 639 residues: Carbon monoxide dehydrogenase (639 aa).

[4Fe-4S] cluster-binding residues include Cys41, Cys49, Cys50, Cys53, Cys58, and Cys72. The [Ni-4Fe-4S] cluster site is built by His265, Cys300, Cys338, Cys451, Cys481, and Cys531.

It belongs to the Ni-containing carbon monoxide dehydrogenase family. In terms of assembly, homodimer. [4Fe-4S] cluster serves as cofactor. It depends on [Ni-4Fe-4S] cluster as a cofactor.

It is found in the cytoplasm. The protein resides in the cell inner membrane. The catalysed reaction is CO + 2 oxidized [2Fe-2S]-[ferredoxin] + H2O = 2 reduced [2Fe-2S]-[ferredoxin] + CO2 + 2 H(+). Functionally, allows growth in a CO-dependent manner in the dark. CODH oxidizes carbon monoxide coupled, via CooF, to the reduction of a hydrogen cation by a hydrogenase (possibly CooH). The protein is Carbon monoxide dehydrogenase (cooS) of Rhodospirillum rubrum.